A 577-amino-acid chain; its full sequence is Cleavage stimulation factor subunit 2 (577 aa).

A Phosphoserine modification is found at Ser-14. Residues Arg-16–Ser-94 enclose the RRM domain. An interactions with CSTF3 and SYMPK region spans residues Ala-108–Ala-248. Residue Lys-189 forms a Glycyl lysine isopeptide (Lys-Gly) (interchain with G-Cter in SUMO2) linkage. The interval Gln-206–Pro-243 is disordered. A compositionally biased stretch (low complexity) spans Asn-222–Gln-232. At Arg-308 the chain carries Omega-N-methylarginine. A disordered region spans residues Glu-340 to Gly-409. Positions Pro-360–Arg-373 are enriched in basic and acidic residues. Residues Ile-410 to Gly-414 form a 1; approximate repeat. The tract at residues Ile-410 to Gly-469 is 12 X 5 AA tandem repeats of M-E-A-R-[AG]. 2 repeat units span residues Met-415–Ala-419 and Met-420–Gly-424. A 4; approximate repeat occupies Leu-425 to Gly-429. The stretch at Leu-430–Ala-434 is one 5; approximate repeat. 4 consecutive repeat copies span residues Met-435 to Ala-439, Met-440 to Ala-444, Met-445 to Ala-449, and Met-450 to Ala-454. The 10; approximate repeat unit spans residues Met-455–Gly-459. Residues Met-460–Gly-464 form repeat 11. Residues Met-465–Gly-469 form a 12; approximate repeat. Omega-N-methylarginine occurs at positions 468 and 475. The interval Gly-508–Pro-532 is disordered. Residues Ile-514–Pro-577 form an interaction with RPO2TC1 region. Phosphoserine is present on residues Ser-518 and Ser-524.

As to quaternary structure, the CSTF complex is composed of CSTF1 (50 kDa subunit), CSTF2 (64 kDa subunit) and CSTF3 (77 kDa subunit). CSTF2 directly interacts with CSTF3, SYMPK and RPO2TC1. Interacts with HSF1 in heat-stressed cells. Interacts with CPSF2, CPSF3 and FIP1L1. Interacts with DDX1.

The protein resides in the nucleus. Its function is as follows. One of the multiple factors required for polyadenylation and 3'-end cleavage of mammalian pre-mRNAs. This subunit is directly involved in the binding to pre-mRNAs. The sequence is that of Cleavage stimulation factor subunit 2 (CSTF2) from Homo sapiens (Human).